The sequence spans 100 residues: Probable DNA-binding protein HU (100 aa).

It belongs to the bacterial histone-like protein family.

Functionally, histone-like DNA-binding protein which is capable of wrapping DNA to stabilize it, and thus to prevent its denaturation under extreme environmental conditions. This is Probable DNA-binding protein HU (hup) from Chlamydia muridarum (strain MoPn / Nigg).